We begin with the raw amino-acid sequence, 687 residues long: Glycine--tRNA ligase beta subunit (687 aa).

Belongs to the class-II aminoacyl-tRNA synthetase family. As to quaternary structure, tetramer of two alpha and two beta subunits.

The protein localises to the cytoplasm. The catalysed reaction is tRNA(Gly) + glycine + ATP = glycyl-tRNA(Gly) + AMP + diphosphate. This Ruegeria sp. (strain TM1040) (Silicibacter sp.) protein is Glycine--tRNA ligase beta subunit.